The following is a 221-amino-acid chain: Tumor protein p53-inducible nuclear protein 2 (221 aa).

The short motif at 26 to 41 (VSEEDEVDGWLIIDLQ) is the LIR element. The tract at residues 41–68 (QDSYTAPPDPGASPAPAGRPPPAPSLMD) is disordered. The segment covering 47 to 64 (PPDPGASPAPAGRPPPAP) has biased composition (pro residues). Residue Ser-136 is modified to Phosphoserine. The interval 177 to 210 (RQRAERHTLSAKVLQRQNRARESRSRRPKHQGSF) is disordered.

As to quaternary structure, interacts with VMP1, GABARAP, GABARAPL1, GABARAPL2, MAP1LC3A, MAP1LC3B, MAP1LC3C and THRA.

Its subcellular location is the cytoplasm. It is found in the cytosol. It localises to the nucleus. The protein localises to the PML body. The protein resides in the cytoplasmic vesicle. Its subcellular location is the autophagosome. Functionally, dual regulator of transcription and autophagy. Positively regulates autophagy and is required for autophagosome formation and processing. May act as a scaffold protein that recruits MAP1LC3A, GABARAP and GABARAPL2 and brings them to the autophagosome membrane by interacting with VMP1 where, in cooperation with the BECN1-PI3-kinase class III complex, they trigger autophagosome development. Acts as a transcriptional activator of THRA. This is Tumor protein p53-inducible nuclear protein 2 (Tp53inp2) from Mus musculus (Mouse).